A 397-amino-acid polypeptide reads, in one-letter code: tRNA pseudouridine synthase D (397 aa).

The active-site Nucleophile is aspartate 76. The TRUD domain maps to 151–361; that stretch reads GVPNFFGEQR…MEGERRPLRV (211 aa).

Belongs to the pseudouridine synthase TruD family.

The catalysed reaction is uridine(13) in tRNA = pseudouridine(13) in tRNA. In terms of biological role, responsible for synthesis of pseudouridine from uracil-13 in transfer RNAs. This chain is tRNA pseudouridine synthase D, found in Geotalea daltonii (strain DSM 22248 / JCM 15807 / FRC-32) (Geobacter daltonii).